Consider the following 289-residue polypeptide: Formamidopyrimidine-DNA glycosylase (289 aa).

Proline 2 acts as the Schiff-base intermediate with DNA in catalysis. Glutamate 3 acts as the Proton donor in catalysis. Residue lysine 61 is the Proton donor; for beta-elimination activity of the active site. The DNA site is built by histidine 97, arginine 119, and lysine 168. The segment at 254–288 (NAYGRAGKPCPRCGEPIVRVQWTNRSSHFCPQCQS) adopts an FPG-type zinc-finger fold. Residue arginine 278 is the Proton donor; for delta-elimination activity of the active site.

It belongs to the FPG family. In terms of assembly, monomer. It depends on Zn(2+) as a cofactor.

It carries out the reaction Hydrolysis of DNA containing ring-opened 7-methylguanine residues, releasing 2,6-diamino-4-hydroxy-5-(N-methyl)formamidopyrimidine.. The catalysed reaction is 2'-deoxyribonucleotide-(2'-deoxyribose 5'-phosphate)-2'-deoxyribonucleotide-DNA = a 3'-end 2'-deoxyribonucleotide-(2,3-dehydro-2,3-deoxyribose 5'-phosphate)-DNA + a 5'-end 5'-phospho-2'-deoxyribonucleoside-DNA + H(+). In terms of biological role, involved in base excision repair of DNA damaged by oxidation or by mutagenic agents. Acts as a DNA glycosylase that recognizes and removes damaged bases. Has a preference for oxidized purines, such as 7,8-dihydro-8-oxoguanine (8-oxoG). Has AP (apurinic/apyrimidinic) lyase activity and introduces nicks in the DNA strand. Cleaves the DNA backbone by beta-delta elimination to generate a single-strand break at the site of the removed base with both 3'- and 5'-phosphates. The sequence is that of Formamidopyrimidine-DNA glycosylase from Corynebacterium urealyticum (strain ATCC 43042 / DSM 7109).